The chain runs to 432 residues: D-amino acid dehydrogenase (432 aa).

Residue Val3–Trp17 coordinates FAD.

Belongs to the DadA oxidoreductase family. FAD serves as cofactor.

It carries out the reaction a D-alpha-amino acid + A + H2O = a 2-oxocarboxylate + AH2 + NH4(+). It participates in amino-acid degradation; D-alanine degradation; NH(3) and pyruvate from D-alanine: step 1/1. Oxidative deamination of D-amino acids. The chain is D-amino acid dehydrogenase from Cronobacter sakazakii (strain ATCC BAA-894) (Enterobacter sakazakii).